A 196-amino-acid polypeptide reads, in one-letter code: Large ribosomal subunit protein eL15 (196 aa).

Basic residues-rich tracts occupy residues 160 to 172 and 186 to 196; these read ATRG…RKGR and PSIRAHKSRGK. Residues 160-196 are disordered; that stretch reads ATRGKTSAGRKGRGMSTRGKGTEKTRPSIRAHKSRGK.

Belongs to the eukaryotic ribosomal protein eL15 family.

In Methanosarcina mazei (strain ATCC BAA-159 / DSM 3647 / Goe1 / Go1 / JCM 11833 / OCM 88) (Methanosarcina frisia), this protein is Large ribosomal subunit protein eL15 (rpl15e).